The following is a 128-amino-acid chain: MEVVNALGRRKRAVARVFVSEGTGKITINKRDLAQYFPSTILQYVVKQPLNKLEAAEKYDIKVNLYGGGFTGQSQALRLAIARALVKINPEDKTALRSEGFMTRDSRSVERKKPGQPKARRRFQFSKR.

A compositionally biased stretch (basic and acidic residues) spans 97–113 (RSEGFMTRDSRSVERKK). The tract at residues 97-128 (RSEGFMTRDSRSVERKKPGQPKARRRFQFSKR) is disordered. The segment covering 114–128 (PGQPKARRRFQFSKR) has biased composition (basic residues).

This sequence belongs to the universal ribosomal protein uS9 family.

The polypeptide is Small ribosomal subunit protein uS9 (Phocaeicola vulgatus (strain ATCC 8482 / DSM 1447 / JCM 5826 / CCUG 4940 / NBRC 14291 / NCTC 11154) (Bacteroides vulgatus)).